A 550-amino-acid chain; its full sequence is MPKILTFNEDARHALERGVNALADVVKVTIGPRGRNVVIDQSYGAATITNDGVTIARLVELEDPYENLGAQLAKEVATKTNDVAGDGTTTATVLAQAMVRFGLKQVTAGAAPLSLKLGIEAAVEAVSAALLEQAIEVSSRQTIAQVAAISAQDTQVGELIAEAIDKIGKDGVITVEESQTLGLDLELTEGMQFDKGYISPYFVTDADSQEAILEDAYVLLYPGKISALNEILPILEQVVQERKPLLIIAEDIEGEALSTLVVNSIRKTFQVVAVKAPGFGDRRKALLQDIAVLTGGQVVAGEVGLSLDAVTLADLGRARRVVVDKENTTIVDGGGEADAVADRVRQLKAEIETSDSDWDREKLQERLAKLAGGVAVIRVGAATEVELKEKKHRLEDAVSATRAAIEEGIVAGGGAALAHVTSVLDDGLGRTGDELAGVRIVRTALDAPLNWIARNAGLEGAVIVARVKDLAPGHGYNAATGEYTDLIAAGVIDPVKVTRSAVANAASIAALLITTESLVVEKPAVSDGDHGHSHGHGHSHGHSHPQGPGF.

ATP contacts are provided by residues 29–32, 86–90, glycine 413, 477–479, and aspartate 493; these read TIGP, DGTTT, and NAA. The interval 524-550 is disordered; it reads AVSDGDHGHSHGHGHSHGHSHPQGPGF. The segment covering 533 to 543 has biased composition (basic residues); it reads SHGHGHSHGHS.

Belongs to the chaperonin (HSP60) family. In terms of assembly, forms a cylinder of 14 subunits composed of two heptameric rings stacked back-to-back. Interacts with the co-chaperonin GroES.

The protein resides in the cytoplasm. It carries out the reaction ATP + H2O + a folded polypeptide = ADP + phosphate + an unfolded polypeptide.. Together with its co-chaperonin GroES, plays an essential role in assisting protein folding. The GroEL-GroES system forms a nano-cage that allows encapsulation of the non-native substrate proteins and provides a physical environment optimized to promote and accelerate protein folding. In Frankia alni (strain DSM 45986 / CECT 9034 / ACN14a), this protein is Chaperonin GroEL 1.